We begin with the raw amino-acid sequence, 38 residues long: Large ribosomal subunit protein bL36 (38 aa).

Belongs to the bacterial ribosomal protein bL36 family.

In Buchnera aphidicola subsp. Acyrthosiphon pisum (strain 5A), this protein is Large ribosomal subunit protein bL36.